A 396-amino-acid polypeptide reads, in one-letter code: Phosphoglycerate kinase (396 aa).

Substrate is bound by residues 21-23, R36, 59-62, R118, and R151; these read DFN and HFDR. ATP-binding positions include K201, E323, and 353 to 356; that span reads GGDT.

It belongs to the phosphoglycerate kinase family. In terms of assembly, monomer.

It localises to the cytoplasm. The enzyme catalyses (2R)-3-phosphoglycerate + ATP = (2R)-3-phospho-glyceroyl phosphate + ADP. The protein operates within carbohydrate degradation; glycolysis; pyruvate from D-glyceraldehyde 3-phosphate: step 2/5. In Caulobacter sp. (strain K31), this protein is Phosphoglycerate kinase.